Consider the following 117-residue polypeptide: Chondroitin proteoglycan 7 (117 aa).

Residues 1-19 (MQTITLLALLACIAVPIFA) form the signal peptide. The tract at residues 31–97 (VEASGEGSGE…SGENLSNGIV (67 aa)) is disordered. Low complexity-rich tracts occupy residues 32–41 (EASGEGSGES) and 48–57 (ESSGEGSGES). Residues Ser-66, Ser-70, Ser-74, Ser-84, and Ser-88 are each glycosylated (O-linked (Xyl...) (chondroitin sulfate) serine). Positions 75–95 (GASDAVLESSGEGSGENLSNG) are enriched in low complexity. N-linked (GlcNAc...) asparagine glycosylation is present at Asn-91.

This is Chondroitin proteoglycan 7 (cpg-7) from Caenorhabditis briggsae.